A 528-amino-acid chain; its full sequence is Nucleobase-ascorbate transporter 5 (528 aa).

The interval 1-20 (MSAPKSGGDPLPHPPKEQLP) is disordered. A run of 12 helical transmembrane segments spans residues 35–55 (AVLL…LIPS), 71–91 (LIQT…VFGT), 93–113 (LPAV…IMLS), 133–153 (TQGA…SGLW), 159–179 (FLSP…LYEL), 181–201 (FPGV…LILI), 219–239 (FAVI…TLGG), 285–305 (FAMM…FIAV), 367–387 (AGFM…ASIP), 390–410 (IIAA…LSLL), 418–438 (FRTL…PQYF), and 460–479 (MVNV…AYLL).

It belongs to the nucleobase:cation symporter-2 (NCS2) (TC 2.A.40) family. In terms of tissue distribution, weakly expressed in the vasculature of developing leaves.

It localises to the membrane. The polypeptide is Nucleobase-ascorbate transporter 5 (NAT5) (Arabidopsis thaliana (Mouse-ear cress)).